Here is a 556-residue protein sequence, read N- to C-terminus: Potassium-transporting ATPase potassium-binding subunit (556 aa).

The next 10 helical transmembrane spans lie at 1–21 (MTWICFLAGLALLAIALGIAQ), 60–80 (SYARAVLAFSFCGVVFLYALQ), 130–150 (GLCVQNFVSAATGIAIAVALI), 173–193 (LRILMPIAAVAAFLLIAGGAV), 245–265 (PQPWTNMLEIFLILLIPFSLP), 281–301 (ILAAMVVLFTVNLCAMAAAEF), 374–394 (GLYGMLVIAVIAVFIAGLLVG), 416–436 (ILVMPTLVLCGVALSLAVPGL), 482–502 (AALGAAMLLGRFVPIILILAL), and 529–549 (LIVFTAILVTALVFFPVLTLG).

It belongs to the KdpA family. The system is composed of three essential subunits: KdpA, KdpB and KdpC.

The protein localises to the cell membrane. Functionally, part of the high-affinity ATP-driven potassium transport (or Kdp) system, which catalyzes the hydrolysis of ATP coupled with the electrogenic transport of potassium into the cytoplasm. This subunit binds the extracellular potassium ions and delivers the ions to the membrane domain of KdpB through an intramembrane tunnel. This Cutibacterium acnes (strain DSM 16379 / KPA171202) (Propionibacterium acnes) protein is Potassium-transporting ATPase potassium-binding subunit.